The following is a 241-amino-acid chain: CD99 antigen-like protein 2 (241 aa).

The N-terminal stretch at 1 to 23 is a signal peptide; it reads MAKWGSPFVFALACLALSWRVYG. The Extracellular portion of the chain corresponds to 24–173; it reads DDFDLYDALG…TGFGSQAETG (150 aa). The disordered stretch occupies residues 30-168; the sequence is DALGDPTEKP…NDGSDTGFGS (139 aa). A compositionally biased stretch (gly residues) spans 143–154; sequence GGGGGGGGGRAT. The helical transmembrane segment at 174–196 threads the bilayer; sequence TIAGIASALAMALIGAVSSYISY. Topologically, residues 197 to 241 are cytoplasmic; it reads QQKKFCFSIQEGLNAEYVKGEHMEAVVSEEPQVKYSVVESQSAIP.

Belongs to the CD99 family.

It is found in the cell membrane. The protein resides in the cell junction. May function as a homophilic adhesion molecule. The polypeptide is CD99 antigen-like protein 2 (cd99l2) (Xenopus tropicalis (Western clawed frog)).